The chain runs to 254 residues: Undecaprenyl-diphosphatase (254 aa).

8 helical membrane-spanning segments follow: residues 1–21 (MDII…FLPI), 41–61 (LTKA…MLIY), 70–90 (IDLW…GFIF), 97–117 (LFNV…FLIV), 134–154 (VSWT…IPGT), 175–195 (AEFS…YDLL), 209–229 (FLIG…LFLV), and 234–254 (FTFV…LMIL).

Belongs to the UppP family.

It localises to the cell inner membrane. It carries out the reaction di-trans,octa-cis-undecaprenyl diphosphate + H2O = di-trans,octa-cis-undecaprenyl phosphate + phosphate + H(+). Functionally, catalyzes the dephosphorylation of undecaprenyl diphosphate (UPP). Confers resistance to bacitracin. This chain is Undecaprenyl-diphosphatase, found in Sulfurovum sp. (strain NBC37-1).